The following is a 413-amino-acid chain: MPSSISWGLLLLAALSCLGPGSLAQDAQETEASKQDQEHPASHKIAPHLAEFALSFYRVLARQSNTTNIFFSPVSIATALAMLSLGTKGDTHTQILEGLDFNLTEMAEADIHQGFQHLLQTLNRPNTQLQLTSGNGLFIDRNLKLLDKFLEDVKSLYHSEAFSTNFTNTEEARQQINSYVEKGTKGKIVELLKELDRDTVLALVNYIFFKGKWKQPFNEEQTREKDFHVDEATTVRVPMMNRLGMFHLHHCSTLASWVLQMDYLGNATAIFLLPDKGKMRHLEDTVTTEILTKFLKNRETTKSQLYFPKVSISGTYDLKDVLSSLGITKVFSSEADLSGVTEEAPLTVSKALHKAVLDIDEEGTEAAGGTVLGNIRSILRYEVIFDRPFLVVIYEHHTKSPLFVGKVVNPTQQ.

The signal sequence occupies residues 1 to 24 (MPSSISWGLLLLAALSCLGPGSLA). Gln25 carries the post-translational modification Pyrrolidone carboxylic acid. N-linked (GlcNAc...) asparagine glycosylation is found at Asn65, Asn102, Asn165, and Asn266. Residues 368-387 (GGTVLGNIRSILRYEVIFDR) are RCL.

It belongs to the serpin family. Expressed in liver.

This chain is Alpha-1-antitrypsin-like protein CM55-SI, found in Tamias sibiricus (Siberian chipmunk).